The following is a 24-amino-acid chain: Grammistin Pp 4b (24 aa).

In terms of assembly, exists as aggregates of 3-4 molecules. In terms of tissue distribution, expressed by the skin glands.

The protein localises to the secreted. In terms of biological role, thanks to its abundant amphiphilic alpha-helices, it may integrate into membrane phospholipids, leading to lysis of the membrane. Its hemolytic activity is inhibited by phospholipids, but not by cholesterol. Has antibacterial activity with a broad spectrum against various species of bacteria including both Gram-positive and Gram-negative groups. Also has ichthyotoxic activity. This Pogonoperca punctata (Clown grouper) protein is Grammistin Pp 4b.